A 390-amino-acid polypeptide reads, in one-letter code: MQQITILGSTGSVGVSTLDVIARHPDRYSVYALTAQSKVEELAQQCARFKPQVAVVGSAEAAKKLQVLLDAQGLHTQVGYGEAALCAVASAPECDSVMAAIVGAAGLAPTLAAARSGKRVLLANKEALVMSGPLLMEAVAASGAILMPIDSEHNAIFQCMPATCQRTPLAHGVEKILLTASGGPFLKRDVNTLDQVSWQEAVAHPKWVMGRKISVDSATMMNKGLEVIEAHWLFDLPAERIEVVIHPQSVVHSMVSYVDGSVLAQLGNPDMRTPIAHALAYPERISSGVPPIDLIQIAQLSFERPDFLRFPCLKLAYDALQAGGSAPAIMNAANEIAVQAFLDSRIGFRAIDQLIARVMDVMPSVAITDIESVFAQDRCARELANSFIPS.

NADPH-binding residues include threonine 10, glycine 11, serine 12, valine 13, and asparagine 124. Lysine 125 contributes to the 1-deoxy-D-xylulose 5-phosphate binding site. Glutamate 126 lines the NADPH pocket. Aspartate 150 serves as a coordination point for Mn(2+). Residues serine 151, glutamate 152, serine 181, and histidine 204 each coordinate 1-deoxy-D-xylulose 5-phosphate. Glutamate 152 is a Mn(2+) binding site. NADPH is bound at residue glycine 210. Residues serine 217, asparagine 222, lysine 223, and glutamate 226 each contribute to the 1-deoxy-D-xylulose 5-phosphate site. Glutamate 226 contacts Mn(2+).

Belongs to the DXR family. It depends on Mg(2+) as a cofactor. Mn(2+) serves as cofactor.

The enzyme catalyses 2-C-methyl-D-erythritol 4-phosphate + NADP(+) = 1-deoxy-D-xylulose 5-phosphate + NADPH + H(+). It participates in isoprenoid biosynthesis; isopentenyl diphosphate biosynthesis via DXP pathway; isopentenyl diphosphate from 1-deoxy-D-xylulose 5-phosphate: step 1/6. In terms of biological role, catalyzes the NADPH-dependent rearrangement and reduction of 1-deoxy-D-xylulose-5-phosphate (DXP) to 2-C-methyl-D-erythritol 4-phosphate (MEP). This chain is 1-deoxy-D-xylulose 5-phosphate reductoisomerase, found in Janthinobacterium sp. (strain Marseille) (Minibacterium massiliensis).